The following is a 557-amino-acid chain: Dihydroxy-acid dehydratase (557 aa).

Residue C49 participates in [2Fe-2S] cluster binding. Mg(2+) is bound at residue D81. C122 is a [2Fe-2S] cluster binding site. D123 and K124 together coordinate Mg(2+). Position 124 is an N6-carboxylysine (K124). C194 contributes to the [2Fe-2S] cluster binding site. E446 is a binding site for Mg(2+). S472 (proton acceptor) is an active-site residue.

It belongs to the IlvD/Edd family. As to quaternary structure, homodimer. Requires [2Fe-2S] cluster as cofactor. The cofactor is Mg(2+).

It catalyses the reaction (2R)-2,3-dihydroxy-3-methylbutanoate = 3-methyl-2-oxobutanoate + H2O. The enzyme catalyses (2R,3R)-2,3-dihydroxy-3-methylpentanoate = (S)-3-methyl-2-oxopentanoate + H2O. It participates in amino-acid biosynthesis; L-isoleucine biosynthesis; L-isoleucine from 2-oxobutanoate: step 3/4. Its pathway is amino-acid biosynthesis; L-valine biosynthesis; L-valine from pyruvate: step 3/4. Functions in the biosynthesis of branched-chain amino acids. Catalyzes the dehydration of (2R,3R)-2,3-dihydroxy-3-methylpentanoate (2,3-dihydroxy-3-methylvalerate) into 2-oxo-3-methylpentanoate (2-oxo-3-methylvalerate) and of (2R)-2,3-dihydroxy-3-methylbutanoate (2,3-dihydroxyisovalerate) into 2-oxo-3-methylbutanoate (2-oxoisovalerate), the penultimate precursor to L-isoleucine and L-valine, respectively. This is Dihydroxy-acid dehydratase from Prochlorococcus marinus (strain AS9601).